A 403-amino-acid polypeptide reads, in one-letter code: Peroxisomal membrane protein PEX13 (403 aa).

Residues 1 to 11 (MASQPPPPPKP) show a composition bias toward pro residues. Residues 1-69 (MASQPPPPPK…SQQTGGNNVN (69 aa)) are disordered. Residues 1 to 134 (MASQPPPPPK…SSRGAFQSIE (134 aa)) are Peroxisomal matrix-facing. A compositionally biased stretch (polar residues) spans 59-69 (PSQQTGGNNVN). A helical membrane pass occupies residues 135–155 (SIVHAFASVSMMMDATFSAVY). The interval 145-233 (MMMDATFSAV…EDQANNSAKS (89 aa)) is targeting to peroxisomes. At 156–174 (NSFRAVLDVANHFSRLKIH) the chain is on the cytoplasmic side. A helical transmembrane segment spans residues 175-192 (FTKVFSAFALVRTIRYLY). The tract at residues 175–196 (FTKVFSAFALVRTIRYLYRRLQ) is interaction with PEX19. The Peroxisomal matrix portion of the chain corresponds to 193 to 233 (RRLQWMMGLRRGSENEDLWAESEGTVACLGAEDQANNSAKS). A helical membrane pass occupies residues 234 to 254 (WPIFLFFAVILGGPYLIWKLL). Residues 255–403 (STHSDEVTDS…TGKNGDKQDL (149 aa)) lie on the Cytoplasmic side of the membrane. The SH3 domain occupies 272–336 (DDHVVARAEY…PANYVKILGK (65 aa)). Disordered regions lie at residues 341–364 (KTVESSTMPKQQQSFTNPTSVKGV) and 381–403 (FVETNKVAGTPDSTGKNGDKQDL). Over residues 344 to 364 (ESSTMPKQQQSFTNPTSVKGV) the composition is skewed to polar residues.

The protein belongs to the peroxin-13 family. Interacts (via SH3 domain) with PEX14 (via SH3-binding motif); forming the PEX13-PEX14 docking complex. Interacts with PEX19.

The protein resides in the peroxisome membrane. Its function is as follows. Component of the PEX13-PEX14 docking complex, a translocon channel that specifically mediates the import of peroxisomal cargo proteins bound to PEX5 receptor. The PEX13-PEX14 docking complex forms a large import pore which can be opened to a diameter of about 9 nm. Mechanistically, PEX5 receptor along with cargo proteins associates with the PEX14 subunit of the PEX13-PEX14 docking complex in the cytosol, leading to the insertion of the receptor into the organelle membrane with the concomitant translocation of the cargo into the peroxisome matrix. Involved in the import of PTS1- and PTS2-type containing proteins. This is Peroxisomal membrane protein PEX13 from Rattus norvegicus (Rat).